We begin with the raw amino-acid sequence, 660 residues long: Bifunctional polymyxin resistance protein ArnA (660 aa).

The segment at methionine 1–leucine 304 is formyltransferase ArnAFT. Histidine 86–isoleucine 88 lines the (6R)-10-formyltetrahydrofolate pocket. The active-site Proton donor; for formyltransferase activity is histidine 104. (6R)-10-formyltetrahydrofolate is bound by residues arginine 114 and valine 136–aspartate 140. Positions arginine 314–serine 660 are dehydrogenase ArnADH. NAD(+) contacts are provided by residues aspartate 347 and aspartate 368–isoleucine 369. UDP-alpha-D-glucuronate is bound by residues alanine 393, tyrosine 398, and threonine 432–serine 433. Glutamate 434 (proton acceptor; for decarboxylase activity) is an active-site residue. Residues arginine 460, asparagine 492, lysine 526 to arginine 535, and tyrosine 613 each bind UDP-alpha-D-glucuronate. Arginine 619 acts as the Proton donor; for decarboxylase activity in catalysis.

In the N-terminal section; belongs to the Fmt family. UDP-L-Ara4N formyltransferase subfamily. The protein in the C-terminal section; belongs to the NAD(P)-dependent epimerase/dehydratase family. UDP-glucuronic acid decarboxylase subfamily. Homohexamer, formed by a dimer of trimers.

It catalyses the reaction UDP-alpha-D-glucuronate + NAD(+) = UDP-beta-L-threo-pentopyranos-4-ulose + CO2 + NADH. The enzyme catalyses UDP-4-amino-4-deoxy-beta-L-arabinose + (6R)-10-formyltetrahydrofolate = UDP-4-deoxy-4-formamido-beta-L-arabinose + (6S)-5,6,7,8-tetrahydrofolate + H(+). The protein operates within nucleotide-sugar biosynthesis; UDP-4-deoxy-4-formamido-beta-L-arabinose biosynthesis; UDP-4-deoxy-4-formamido-beta-L-arabinose from UDP-alpha-D-glucuronate: step 1/3. It participates in nucleotide-sugar biosynthesis; UDP-4-deoxy-4-formamido-beta-L-arabinose biosynthesis; UDP-4-deoxy-4-formamido-beta-L-arabinose from UDP-alpha-D-glucuronate: step 3/3. It functions in the pathway bacterial outer membrane biogenesis; lipopolysaccharide biosynthesis. Functionally, bifunctional enzyme that catalyzes the oxidative decarboxylation of UDP-glucuronic acid (UDP-GlcUA) to UDP-4-keto-arabinose (UDP-Ara4O) and the addition of a formyl group to UDP-4-amino-4-deoxy-L-arabinose (UDP-L-Ara4N) to form UDP-L-4-formamido-arabinose (UDP-L-Ara4FN). The modified arabinose is attached to lipid A and is required for resistance to polymyxin and cationic antimicrobial peptides. In Escherichia coli (strain SMS-3-5 / SECEC), this protein is Bifunctional polymyxin resistance protein ArnA.